A 173-amino-acid polypeptide reads, in one-letter code: uncharacterized protein (173 aa).

A disordered region spans residues 49–72 (PTRSGRTSNSGNRGPVMTSTSSIN).

This is an uncharacterized protein from Human adenovirus B serotype 7 (HAdV-7).